A 185-amino-acid chain; its full sequence is Putative F-box protein At3g17400 (185 aa).

The 47-residue stretch at 1–47 (MMTLSDLPSDLAEEVLSKIPVTSLRGVRATCKKWNTLSKDRSFTRKH) folds into the F-box domain.

This chain is Putative F-box protein At3g17400, found in Arabidopsis thaliana (Mouse-ear cress).